The following is a 377-amino-acid chain: MGHDSDVRADIAHARRLVVKIGSSSLTDDDGRVDPNQIDMIADALEARMARDTDLIVVSSGAVACGMGPLELAQRPTDLATKQAAASVGQVLLAQEWARSFARYGRTIGQVLLTASDAAERDRARNAQRTIDRLRQLKAVPIVNENDTVATSEMRFGDNDRLAALVSHLAFADACVLLSDVDGLYDRNPAEPGAQFIAEVKSSKDLKGVAAGDGGRLGTGGMAAKVSAARLASRAGVPVLLTSTENIGAALDTAEVGTCFWPDQDRLSAWKFWVLYAADSHGQLHLDAGAVHAVTENHKSLLSVGITKVEGDFSQRDVVDLVGPDGNIVGRGEVAYDSAMLHDLIGQSTSDLPEFARRPVVHADYMSHYSNRAQLKG.

Lys20 provides a ligand contact to ATP. 3 residues coordinate substrate: Ser60, Asp147, and Asn159. An ATP-binding site is contributed by 179–180 (SD). Residues 281-355 (HGQLHLDAGA…GQSTSDLPEF (75 aa)) enclose the PUA domain.

Belongs to the glutamate 5-kinase family.

It localises to the cytoplasm. The catalysed reaction is L-glutamate + ATP = L-glutamyl 5-phosphate + ADP. Its pathway is amino-acid biosynthesis; L-proline biosynthesis; L-glutamate 5-semialdehyde from L-glutamate: step 1/2. Its function is as follows. Catalyzes the transfer of a phosphate group to glutamate to form L-glutamate 5-phosphate. This is Glutamate 5-kinase from Corynebacterium jeikeium (strain K411).